The following is a 916-amino-acid chain: Protein translocase subunit SecA (916 aa).

ATP contacts are provided by residues Gln-87, 105–109 (GEGKT), and Asp-507. 4 residues coordinate Zn(2+): Cys-900, Cys-902, Cys-911, and His-912.

This sequence belongs to the SecA family. In terms of assembly, monomer and homodimer. Part of the essential Sec protein translocation apparatus which comprises SecA, SecYEG and auxiliary proteins SecDF-YajC and YidC. Requires Zn(2+) as cofactor.

It localises to the cell inner membrane. Its subcellular location is the cytoplasm. The catalysed reaction is ATP + H2O + cellular proteinSide 1 = ADP + phosphate + cellular proteinSide 2.. Part of the Sec protein translocase complex. Interacts with the SecYEG preprotein conducting channel. Has a central role in coupling the hydrolysis of ATP to the transfer of proteins into and across the cell membrane, serving both as a receptor for the preprotein-SecB complex and as an ATP-driven molecular motor driving the stepwise translocation of polypeptide chains across the membrane. This is Protein translocase subunit SecA from Neisseria meningitidis serogroup B (strain ATCC BAA-335 / MC58).